The primary structure comprises 160 residues: MITLYEAAIKTLITHRKQILKHPDSREILLALGLYWDKTHILLKCQECGKISLTGKHSTKCININCLLILAIKKKNKRIVDTLIGMGADVKYIHFLNNKTKLSYNQLSMLKSNPQISLKEFHAICYILYGRLPKKIKQGMRLCKTLAGLCGELLCAFFAP.

This sequence belongs to the asfivirus MGF 300 family.

Functionally, plays a role in virus cell tropism, and may be required for efficient virus replication in macrophages. The polypeptide is Protein MGF 300-2R (African swine fever virus (isolate Tick/Malawi/Lil 20-1/1983) (ASFV)).